The following is a 581-amino-acid chain: MYPEDSRGSGGVATVDFLEGTYDYAAPTPAPTPLYSHSTPGYYSAPLDAHGPPSDGSLQSLGSGPNSPLVFVPSSPRLSPFMHPPTHHYLETTSTPVYRSSVPSSQQSVSREDQCGTSDDSYSVGESGAGALAAGFEIAKEMRFCAVCSDYASGYHYGVWSCEGCKAFFKRSIQGHNDYMCPATNQCTIDRNRRKSCQACRLRKCYEVGMMKGGMRKDRGRVLRRDKQRTGTSDRDKASKGLEHRTAPPQDRRKHISSSAGGGGGKSSMISMPPDQVLLLLQGAEPPMLCSRQKLNRPYTEVTMMTLLTSMADKELVHMIAWAKKLPGFLQLSLHDQVQLLESSWLEVLMIGLIWRSIHCPGKLIFAQDLILDRSEGDCVEGMAEIFDMLLATASRFRMLKLKPEEFVCLKAIILLNSGAFSFCTGTMEPLHDGAAVQNMLDTITDALIHHINQSGCSAQQQSRRQAQLLLLLSHIRHMSNKGMEHLYSMKCKNKVPLYDLLLEMLDAHRIHRADRPAETWSQADREPPFTSRNSSGGGGGGGGGSSSAGSTSGPRVSHESPTSPGVLQYGGSRSECTHIL.

The interval methionine 1 to phenylalanine 144 is modulating. Disordered stretches follow at residues alanine 45–asparagine 66 and proline 96–tyrosine 122. Positions glycine 56 to asparagine 66 are enriched in polar residues. Residues serine 100–valine 109 are compositionally biased toward low complexity. NR C4-type zinc fingers lie at residues cysteine 145 to cysteine 165 and cysteine 181 to cysteine 205. Residues cysteine 145–methionine 210 constitute a DNA-binding region (nuclear receptor). Residues methionine 211–methionine 272 form a hinge region. Residues arginine 216–threonine 246 show a composition bias toward basic and acidic residues. Positions arginine 216–serine 268 are disordered. One can recognise an NR LBD domain in the interval proline 273 to histidine 509. Over residues arginine 516–proline 528 the composition is skewed to basic and acidic residues. A disordered region spans residues arginine 516 to leucine 581. Over residues serine 536–serine 547 the composition is skewed to gly residues.

This sequence belongs to the nuclear hormone receptor family. NR3 subfamily. As to quaternary structure, binds DNA as a homodimer. Can form a heterodimer with ER-beta.

Its subcellular location is the nucleus. The steroid hormones and their receptors are involved in the regulation of eukaryotic gene expression and affect cellular proliferation and differentiation in target tissues. This chain is Estrogen receptor (esr1), found in Pagrus major (Red sea bream).